The chain runs to 114 residues: DNA-binding protein rrnAC3180 (114 aa).

The span at 1 to 11 shows a compositional bias: acidic residues; sequence MSGDPSEEELE. Residues 1 to 45 are disordered; the sequence is MSGDPSEEELEELRKKKMEQLKEQQGGEGEGQEAAQQQAEAQKQA. The span at 12–22 shows a compositional bias: basic and acidic residues; sequence ELRKKKMEQLK. The span at 32-45 shows a compositional bias: low complexity; that stretch reads QEAAQQQAEAQKQA.

The protein belongs to the PDCD5 family.

This chain is DNA-binding protein rrnAC3180, found in Haloarcula marismortui (strain ATCC 43049 / DSM 3752 / JCM 8966 / VKM B-1809) (Halobacterium marismortui).